Consider the following 620-residue polypeptide: 1-deoxy-D-xylulose-5-phosphate synthase (620 aa).

Residues His-80 and 121–123 (GHS) contribute to the thiamine diphosphate site. Asp-152 serves as a coordination point for Mg(2+). Thiamine diphosphate contacts are provided by residues 153-154 (GA), Asn-181, Tyr-288, and Glu-370. Mg(2+) is bound at residue Asn-181.

Belongs to the transketolase family. DXPS subfamily. As to quaternary structure, homodimer. Requires Mg(2+) as cofactor. It depends on thiamine diphosphate as a cofactor.

It catalyses the reaction D-glyceraldehyde 3-phosphate + pyruvate + H(+) = 1-deoxy-D-xylulose 5-phosphate + CO2. It functions in the pathway metabolic intermediate biosynthesis; 1-deoxy-D-xylulose 5-phosphate biosynthesis; 1-deoxy-D-xylulose 5-phosphate from D-glyceraldehyde 3-phosphate and pyruvate: step 1/1. Catalyzes the acyloin condensation reaction between C atoms 2 and 3 of pyruvate and glyceraldehyde 3-phosphate to yield 1-deoxy-D-xylulose-5-phosphate (DXP). The protein is 1-deoxy-D-xylulose-5-phosphate synthase of Escherichia coli O127:H6 (strain E2348/69 / EPEC).